We begin with the raw amino-acid sequence, 122 residues long: Large ribosomal subunit protein uL14 (122 aa).

Belongs to the universal ribosomal protein uL14 family. As to quaternary structure, part of the 50S ribosomal subunit. Forms a cluster with proteins L3 and L19. In the 70S ribosome, L14 and L19 interact and together make contacts with the 16S rRNA in bridges B5 and B8.

Functionally, binds to 23S rRNA. Forms part of two intersubunit bridges in the 70S ribosome. This chain is Large ribosomal subunit protein uL14, found in Chloroflexus aggregans (strain MD-66 / DSM 9485).